The primary structure comprises 473 residues: Reticulon-4 receptor (473 aa).

The N-terminal stretch at Met-1–Pro-26 is a signal peptide. 2 disulfide bridges follow: Cys-27/Cys-33 and Cys-31/Cys-43. The LRRNT domain occupies Cys-27–Ala-57. LRR repeat units follow at residues Ser-58 to Ser-79, Asn-82 to Gly-103, Leu-106 to Gly-128, His-131 to Gly-152, Ala-155 to Asp-176, Asn-179 to Gly-200, Ser-203 to Asp-224, and Arg-227 to Pro-248. Residue Asn-82 is glycosylated (N-linked (GlcNAc...) asparagine). A glycan (N-linked (GlcNAc...) asparagine) is linked at Asn-179. The 52-residue stretch at Asn-260–Val-311 folds into the LRRCT domain. Intrachain disulfides connect Cys-264–Cys-287, Cys-266–Cys-335, and Cys-309–Cys-336. Residues Val-346–Gly-446 are disordered. Asn-372 carries N-linked (GlcNAc...) asparagine glycosylation. Basic residues predominate over residues Pro-413–Cys-429. Over residues Ala-434–Glu-445 the composition is skewed to gly residues. A lipid anchor (GPI-anchor amidated serine) is attached at Ser-447. Residues Gly-448 to Cys-473 constitute a propeptide, removed in mature form.

Belongs to the Nogo receptor family. As to quaternary structure, homodimer. Interacts with MAG. Interacts with RTN4. Interacts with NGFR. Interacts with LINGO1. Interacts with KIAA0319L. Interacts with OLFM1; this inhibits interaction with LINGO1 and NGFR. Interacts with OMG. In terms of processing, N-glycosylated. O-glycosylated. Contains terminal sialic acid groups on its glycan chains. Detected in embryonic hippocampus neurons. Detected in brain (at protein level). Detected in neurons in the neocortex, in hippocampus, dorsal thalamus, cerebellum granule cell layer and the mitral cell layer in the olfactory bulb. Detected in brain, dorsal root ganglion and heart.

It is found in the cell membrane. It localises to the membrane raft. Its subcellular location is the cell projection. The protein localises to the dendrite. The protein resides in the axon. It is found in the perikaryon. In terms of biological role, receptor for RTN4, OMG and MAG. Functions as a receptor for the sialylated gangliosides GT1b and GM1. Besides, functions as a receptor for chondroitin sulfate proteoglycans. Can also bind heparin. Intracellular signaling cascades are triggered via the coreceptor NGFR. Signaling mediates activation of Rho and downstream reorganization of the actin cytoskeleton. Mediates axonal growth inhibition. Mediates axonal growth inhibition and plays a role in regulating axon regeneration and neuronal plasticity in the adult central nervous system. Plays a role in postnatal brain development. Required for normal axon migration across the brain midline and normal formation of the corpus callosum. Protects motoneurons against apoptosis; protection against apoptosis is probably mediated via interaction with MAG. Acts in conjunction with RTN4 and LINGO1 in regulating neuronal precursor cell motility during cortical development. Like other family members, plays a role in restricting the number dendritic spines and the number of synapses that are formed during brain development. This chain is Reticulon-4 receptor (Rtn4r), found in Mus musculus (Mouse).